A 991-amino-acid polypeptide reads, in one-letter code: Translation initiation factor IF-2 (991 aa).

Disordered stretches follow at residues 58–82 (EGKK…GRSR) and 106–405 (QARA…PAPQ). Over residues 106 to 164 (QARADAAASDAAPAEPAPAAAEPSASAPVTAPVNAPAADAPQAPATAAPDTAAPAAETP) the composition is skewed to low complexity. A compositionally biased stretch (pro residues) spans 165-175 (SQPPAVEPQPA). Low complexity-rich tracts occupy residues 190-206 (AKPA…AAVE), 221-258 (AVQA…ASKP), and 267-276 (APVPVAAPAV). Residues 279-289 (AGREEARRAAE) show a composition bias toward basic and acidic residues. A compositionally biased stretch (gly residues) spans 379–388 (RAGGKGGKGG). The segment covering 395 to 405 (QAERRHEPAPQ) has biased composition (basic and acidic residues). Positions 492–659 (PRAPVVTVMG…NVLLQAEILE (168 aa)) constitute a tr-type G domain. Positions 501–508 (GHVDHGKT) are G1. 501–508 (GHVDHGKT) contributes to the GTP binding site. A G2 region spans residues 526 to 530 (GITQH). Positions 547–550 (DTPG) are G3. GTP is bound by residues 547–551 (DTPGH) and 601–604 (NKID). Residues 601-604 (NKID) form a G4 region. The G5 stretch occupies residues 637–639 (SAK).

The protein belongs to the TRAFAC class translation factor GTPase superfamily. Classic translation factor GTPase family. IF-2 subfamily.

The protein resides in the cytoplasm. In terms of biological role, one of the essential components for the initiation of protein synthesis. Protects formylmethionyl-tRNA from spontaneous hydrolysis and promotes its binding to the 30S ribosomal subunits. Also involved in the hydrolysis of GTP during the formation of the 70S ribosomal complex. The chain is Translation initiation factor IF-2 from Bordetella petrii (strain ATCC BAA-461 / DSM 12804 / CCUG 43448).